The primary structure comprises 292 residues: Nucleophosmin (292 aa).

M1 carries the N-acetylmethionine modification. Residues 1-117 (MEDSMDMDMS…PVHISGQHLV (117 aa)) are necessary for interaction with APEX1. The tract at residues 1–185 (MEDSMDMDMS…DDDDFDEEET (185 aa)) is required for interaction with SENP3. S4 is modified (phosphoserine; by PLK1 and PLK2). S10 is subject to Phosphoserine. K27 participates in a covalent cross-link: Glycyl lysine isopeptide (Lys-Gly) (interchain with G-Cter in SUMO2). K32 bears the N6-acetyllysine; alternate mark. Residue K32 forms a Glycyl lysine isopeptide (Lys-Gly) (interchain with G-Cter in SUMO1); alternate linkage. K32 participates in a covalent cross-link: Glycyl lysine isopeptide (Lys-Gly) (interchain with G-Cter in SUMO2); alternate. Position 43 is a phosphoserine (S43). Y67 is subject to Phosphotyrosine. Phosphoserine is present on S70. T75 and T95 each carry phosphothreonine. Residues S125 and S139 each carry the phosphoserine modification. Residues 138–248 (MSGKRSAPGG…PSSVEDIKAK (111 aa)) form a disordered region. K141 participates in a covalent cross-link: Glycyl lysine isopeptide (Lys-Gly) (interchain with G-Cter in SUMO2). An N6-acetyllysine; alternate modification is found at K150. A Glycyl lysine isopeptide (Lys-Gly) (interchain with G-Cter in SUMO2); alternate cross-link involves residue K150. Positions 152 to 157 (PQKKVK) match the Nuclear localization signal motif. K154 carries the post-translational modification N6-acetyllysine. Residues 159–186 (DEDDEDDDEDDEDDEDDDDDDFDEEETE) are compositionally biased toward acidic residues. Residues 186-214 (EEKVPVKKSVRDTPAKNAQKSNQNGKDLK) are interaction with NOP2. Over residues 187–199 (EKVPVKKSVRDTP) the composition is skewed to basic and acidic residues. Residues 190 to 196 (PVKKSVR) carry the Nuclear localization signal motif. Position 198 is a phosphothreonine; by CDK1 and CDK2 (T198). Residues 201–210 (KNAQKSNQNG) are compositionally biased toward polar residues. At S206 the chain carries ADP-ribosylserine. Position 211 is an N6-acetyllysine (K211). K214 is covalently cross-linked (Glycyl lysine isopeptide (Lys-Gly) (interchain with G-Cter in SUMO2)). A Phosphothreonine; by CDK1 modification is found at T217. Residues 221–233 (KGQESFKKQEKTP) show a composition bias toward basic and acidic residues. S225 is modified (phosphoserine). K227 is subject to N6-acetyllysine. K228 is subject to N6-acetyllysine; alternate. K228 is covalently cross-linked (Glycyl lysine isopeptide (Lys-Gly) (interchain with G-Cter in SUMO); alternate). A phosphothreonine; by CDK1 mark is found at T232 and T235. Phosphoserine is present on residues S240 and S241. The interval 241–292 (SVEDIKAKMQASIEKGGSLPKVEAKFINYVKNCFRMTDQEAIQDLWQWRKSL) is required for nucleolar localization. Residue K246 forms a Glycyl lysine isopeptide (Lys-Gly) (interchain with G-Cter in SUMO1); alternate linkage. Glycyl lysine isopeptide (Lys-Gly) (interchain with G-Cter in SUMO2); alternate cross-links involve residues K246 and K248. K248 is subject to N6-acetyllysine; alternate. Phosphoserine is present on S252. N6-acetyllysine; alternate is present on K255. K255 is covalently cross-linked (Glycyl lysine isopeptide (Lys-Gly) (interchain with G-Cter in SUMO1); alternate). Residue K255 forms a Glycyl lysine isopeptide (Lys-Gly) (interchain with G-Cter in SUMO2); alternate linkage. Position 258 is a phosphoserine (S258). Residues K261, K265, and K271 each participate in a glycyl lysine isopeptide (Lys-Gly) (interchain with G-Cter in SUMO2); alternate cross-link. K261 participates in a covalent cross-link: Glycyl lysine isopeptide (Lys-Gly) (interchain with G-Cter in SUMO); alternate. An N6-acetyllysine; alternate mark is found at K265 and K271. K265 participates in a covalent cross-link: Glycyl lysine isopeptide (Lys-Gly) (interchain with G-Cter in SUMO1); alternate. K265 bears the N6-succinyllysine; alternate mark. T277 bears the Phosphothreonine mark. K290 is subject to N6-acetyllysine.

Belongs to the nucleoplasmin family. Decamer formed by two pentameric rings associated in a head-to-head fashion. Disulfide-linked dimers under certain conditions. Interacts with NSUN2 and SENP3. The SWAP complex consists of NPM1, NCL, PARP1 and SWAP70. Interacts with the methylated form of RPS10. Interacts (via N-terminal domain) with APEX1; the interaction is RNA-dependent and decreases peroxide-damaged cells. Interacts with NEK2. Interacts with ROCK2 and BRCA2. Interacts with RPGR. Interacts with CENPW. Interacts with EIF2AK2/PKR. Interacts with DDX31; this interaction prevents interaction between NPM1 and HDM2. Interacts with MYC; competitive with NOP53. Interacts with NOP53; the interaction is direct and competitive with MYC. Interacts with LRRC34. Interacts with RRP1B. Interacts with NPM3. Interacts with ALKBH2. Interacts with TTF1 (via C-terminal region). Interacts with NOP2. Interacts with ARID3C (via REKLES DOMAIN); the interaction mediates ARID3C nuclear shuttling. Post-translationally, acetylated at C-terminal lysine residues, thereby increasing affinity to histones. In terms of processing, ADP-ribosylated. Phosphorylated at Ser-4 by PLK1 and PLK2. Phosphorylation at Ser-4 by PLK2 in S phase is required for centriole duplication and is sufficient to trigger centriole replication. Phosphorylation at Ser-4 by PLK1 takes place during mitosis. Phosphorylated by CDK2 at Ser-125 and Thr-198. Phosphorylation at Thr-198 may trigger initiation of centrosome duplication. Phosphorylated by CDK1 at Thr-198, Thr-217, Thr-232 and Thr-235 during cell mitosis. When these four sites are phosphorated, RNA-binding activity seem to be abolished. May be phosphorylated at Ser-70 by NEK2. The Thr-198 phosphorylated form has higher affinity for ROCK2. Post-translationally, sumoylated by ARF. In terms of processing, ubiquitinated. Ubiquitination leads to proteasomal degradation. Deubiquitinated by USP36. As to expression, expressed in B-cells that have been induced to switch to various Ig isotypes.

The protein localises to the nucleus. Its subcellular location is the nucleolus. It localises to the nucleoplasm. The protein resides in the cytoplasm. It is found in the cytoskeleton. The protein localises to the microtubule organizing center. Its subcellular location is the centrosome. Functionally, involved in diverse cellular processes such as ribosome biogenesis, centrosome duplication, protein chaperoning, histone assembly, cell proliferation, and regulation of tumor suppressors p53/TP53 and ARF. Binds ribosome presumably to drive ribosome nuclear export. Associated with nucleolar ribonucleoprotein structures and bind single-stranded nucleic acids. Acts as a chaperonin for the core histones H3, H2B and H4. Stimulates APEX1 endonuclease activity on apurinic/apyrimidinic (AP) double-stranded DNA but inhibits APEX1 endonuclease activity on AP single-stranded RNA. May exert a control of APEX1 endonuclease activity within nucleoli devoted to repair AP on rDNA and the removal of oxidized rRNA molecules. In concert with BRCA2, regulates centrosome duplication. Regulates centriole duplication: phosphorylation by PLK2 is able to trigger centriole replication. Negatively regulates the activation of EIF2AK2/PKR and suppresses apoptosis through inhibition of EIF2AK2/PKR autophosphorylation. Antagonizes the inhibitory effect of ATF5 on cell proliferation and relieves ATF5-induced G2/M blockade. In complex with MYC enhances the transcription of MYC target genes. May act as chaperonin or cotransporter in the nucleolar localization of transcription termination factor TTF1. The protein is Nucleophosmin (Npm1) of Mus musculus (Mouse).